The chain runs to 225 residues: 2-C-methyl-D-erythritol 4-phosphate cytidylyltransferase (225 aa).

This sequence belongs to the IspD/TarI cytidylyltransferase family. IspD subfamily.

It carries out the reaction 2-C-methyl-D-erythritol 4-phosphate + CTP + H(+) = 4-CDP-2-C-methyl-D-erythritol + diphosphate. Its pathway is isoprenoid biosynthesis; isopentenyl diphosphate biosynthesis via DXP pathway; isopentenyl diphosphate from 1-deoxy-D-xylulose 5-phosphate: step 2/6. Its function is as follows. Catalyzes the formation of 4-diphosphocytidyl-2-C-methyl-D-erythritol from CTP and 2-C-methyl-D-erythritol 4-phosphate (MEP). This is 2-C-methyl-D-erythritol 4-phosphate cytidylyltransferase from Cereibacter sphaeroides (strain ATCC 17023 / DSM 158 / JCM 6121 / CCUG 31486 / LMG 2827 / NBRC 12203 / NCIMB 8253 / ATH 2.4.1.) (Rhodobacter sphaeroides).